The sequence spans 213 residues: Kynurenine formamidase (213 aa).

Tryptophan 18 lines the substrate pocket. Histidine 48, histidine 52, and aspartate 54 together coordinate Zn(2+). Histidine 58 acts as the Proton donor/acceptor in catalysis. Zn(2+) contacts are provided by histidine 160 and glutamate 172.

The protein belongs to the Cyclase 1 superfamily. KynB family. In terms of assembly, homodimer. Requires Zn(2+) as cofactor.

The catalysed reaction is N-formyl-L-kynurenine + H2O = L-kynurenine + formate + H(+). It functions in the pathway amino-acid degradation; L-tryptophan degradation via kynurenine pathway; L-kynurenine from L-tryptophan: step 2/2. Functionally, catalyzes the hydrolysis of N-formyl-L-kynurenine to L-kynurenine, the second step in the kynurenine pathway of tryptophan degradation. The chain is Kynurenine formamidase from Burkholderia multivorans (strain ATCC 17616 / 249).